The chain runs to 355 residues: MEKVGRRVFLGMGAAATAYVTHHLWNQNAESSYAQQSSGGVINVYSARHYDTDKALYNTFTQQTGIRVNIIEAEADALIERIRSEGSRTPADVLITVDAGRLWRAQEAGILQPIQSRVLNSVVPANLREPQGHWFGLSRRVRVLIYNKSRVNPSQLSTYEDLANPKWRRQILTRSSSNIYNQSLTGSLLAIHGAQKTEQWARGLVQNFARPPEGNDTAQIRACAEGVGSVAIANHYYLARLIASDKEQDRAVAAKVGLFFPNQRDRGAHVNISGAGVVAGAPNRQGAIRFLEYLVSPKAQEMFAMANFEYPVRAGVPVHPIVKQFGNFRGQNVNAAVFGRNNAEALRIMDRAGWR.

The tat-type signal signal peptide spans 1 to 34 (MEKVGRRVFLGMGAAATAYVTHHLWNQNAESSYA). Residues H49, Y50, Y180, Y236, and Y237 each contribute to the Fe cation site.

This sequence belongs to the bacterial solute-binding protein 1 family. In terms of processing, predicted to be exported by the Tat system. The position of the signal peptide cleavage has not been experimentally proven.

It localises to the cellular thylakoid membrane. Plays an important role in protecting the acceptor side of photosystem II (PSII) against oxidative damage, especially under iron-limiting growth conditions. Functionally, may also be part of a periplasmic ABC transporter complex involved in iron import. The sequence is that of Iron deficiency-induced protein A (idiA) from Thermosynechococcus vestitus (strain NIES-2133 / IAM M-273 / BP-1).